The following is a 409-amino-acid chain: Glucose-1-phosphate adenylyltransferase (409 aa).

Alpha-D-glucose 1-phosphate is bound by residues G168, 183-184 (EK), and S201.

The protein belongs to the bacterial/plant glucose-1-phosphate adenylyltransferase family. As to quaternary structure, homotetramer.

It carries out the reaction alpha-D-glucose 1-phosphate + ATP + H(+) = ADP-alpha-D-glucose + diphosphate. It participates in glycan biosynthesis; glycogen biosynthesis. In terms of biological role, involved in the biosynthesis of ADP-glucose, a building block required for the elongation reactions to produce glycogen. Catalyzes the reaction between ATP and alpha-D-glucose 1-phosphate (G1P) to produce pyrophosphate and ADP-Glc. The chain is Glucose-1-phosphate adenylyltransferase from Corynebacterium efficiens (strain DSM 44549 / YS-314 / AJ 12310 / JCM 11189 / NBRC 100395).